A 326-amino-acid chain; its full sequence is Lipoyl synthase (326 aa).

[4Fe-4S] cluster-binding residues include Cys-74, Cys-79, Cys-85, Cys-100, Cys-104, Cys-107, and Ser-314. Residues 85 to 303 (CFGRGTATFM…EEEAYKMGFS (219 aa)) form the Radical SAM core domain.

It belongs to the radical SAM superfamily. Lipoyl synthase family. The cofactor is [4Fe-4S] cluster.

The protein localises to the cytoplasm. It catalyses the reaction [[Fe-S] cluster scaffold protein carrying a second [4Fe-4S](2+) cluster] + N(6)-octanoyl-L-lysyl-[protein] + 2 oxidized [2Fe-2S]-[ferredoxin] + 2 S-adenosyl-L-methionine + 4 H(+) = [[Fe-S] cluster scaffold protein] + N(6)-[(R)-dihydrolipoyl]-L-lysyl-[protein] + 4 Fe(3+) + 2 hydrogen sulfide + 2 5'-deoxyadenosine + 2 L-methionine + 2 reduced [2Fe-2S]-[ferredoxin]. The protein operates within protein modification; protein lipoylation via endogenous pathway; protein N(6)-(lipoyl)lysine from octanoyl-[acyl-carrier-protein]: step 2/2. In terms of biological role, catalyzes the radical-mediated insertion of two sulfur atoms into the C-6 and C-8 positions of the octanoyl moiety bound to the lipoyl domains of lipoate-dependent enzymes, thereby converting the octanoylated domains into lipoylated derivatives. This is Lipoyl synthase from Acidovorax ebreus (strain TPSY) (Diaphorobacter sp. (strain TPSY)).